A 115-amino-acid chain; its full sequence is Peptidyl-tRNA hydrolase (115 aa).

This sequence belongs to the PTH2 family.

It is found in the cytoplasm. It catalyses the reaction an N-acyl-L-alpha-aminoacyl-tRNA + H2O = an N-acyl-L-amino acid + a tRNA + H(+). Functionally, the natural substrate for this enzyme may be peptidyl-tRNAs which drop off the ribosome during protein synthesis. This Nanoarchaeum equitans (strain Kin4-M) protein is Peptidyl-tRNA hydrolase (pth).